The following is a 234-amino-acid chain: MIKSKFIVIEGLEGSGKTNAISKIVNLLNKQGIKNVIFTREPGGTPLAESLRTLIKEGVGYEKITDNAELLMIYAARIQLVESVIKPALENGSWVVGDRHDLSSLAYQGGGRKIDTKILKMLREVFLRDFYPDLTFYLDIPPIMGLARIRARATVRAQIRDKVNKIKRNHSHDIKNALDRIEVEPISFFDRTRKKYKELASKNEKIITIDASKSLELVNKEIKHQLLKWLKKQI.

11–18 (GLEGSGKT) is a binding site for ATP.

The protein belongs to the thymidylate kinase family.

It carries out the reaction dTMP + ATP = dTDP + ADP. Its function is as follows. Phosphorylation of dTMP to form dTDP in both de novo and salvage pathways of dTTP synthesis. This Wigglesworthia glossinidia brevipalpis protein is Thymidylate kinase.